Here is a 660-residue protein sequence, read N- to C-terminus: Glycogen debranching enzyme (660 aa).

Asp338 acts as the Nucleophile in catalysis. The active-site Proton donor is Glu373. Residues 460 to 472 (NEANGEDNRDGAW) show a composition bias toward basic and acidic residues. Positions 460 to 482 (NEANGEDNRDGAWENHSNNHGYE) are disordered.

This sequence belongs to the glycosyl hydrolase 13 family.

It catalyses the reaction Hydrolysis of (1-&gt;6)-alpha-D-glucosidic linkages to branches with degrees of polymerization of three or four glucose residues in limit dextrin.. Its pathway is glycan degradation; glycogen degradation. In terms of biological role, removes maltotriose and maltotetraose chains that are attached by 1,6-alpha-linkage to the limit dextrin main chain, generating a debranched limit dextrin. In Cronobacter sakazakii (strain ATCC BAA-894) (Enterobacter sakazakii), this protein is Glycogen debranching enzyme.